A 143-amino-acid polypeptide reads, in one-letter code: Crossover junction endodeoxyribonuclease Hjc (143 aa).

Mg(2+) is bound at residue glutamate 12. Residue serine 32 is part of the active site. Aspartate 42 and glutamate 55 together coordinate Mg(2+).

The protein belongs to the Holliday junction resolvase Hjc family. Homodimer. It depends on Mg(2+) as a cofactor.

The catalysed reaction is Endonucleolytic cleavage at a junction such as a reciprocal single-stranded crossover between two homologous DNA duplexes (Holliday junction).. A structure-specific endonuclease that resolves Holliday junction (HJ) intermediates during genetic recombination. Cleaves 4-way DNA junctions introducing paired nicks in opposing strands, leaving a 5'-terminal phosphate and a 3'-terminal hydroxyl group that are subsequently ligated to produce recombinant products. Its function is as follows. Hjc, Hjm (Hel308) and PINA coordinate HJ migration and cleavage of replication forks in a coordinated way. The chain is Crossover junction endodeoxyribonuclease Hjc from Saccharolobus islandicus (strain REY15A) (Sulfolobus islandicus).